The primary structure comprises 277 residues: Large ribosomal subunit protein uL2c (277 aa).

Positions 30-60 are disordered; the sequence is RKKLTSGQHSGKGRNNRGIITSRHRGGGHKR. The span at 51–60 shows a compositional bias: basic residues; the sequence is SRHRGGGHKR.

This sequence belongs to the universal ribosomal protein uL2 family. Part of the 50S ribosomal subunit.

It localises to the plastid. Its subcellular location is the chloroplast. The polypeptide is Large ribosomal subunit protein uL2c (rpl2) (Angiopteris evecta (Mule's foot fern)).